The primary structure comprises 466 residues: Probable Xaa-Pro aminopeptidase pepP (466 aa).

Mn(2+) is bound by residues D264, D275, E398, and E438.

This sequence belongs to the peptidase M24B family. The cofactor is Mn(2+).

The catalysed reaction is Release of any N-terminal amino acid, including proline, that is linked to proline, even from a dipeptide or tripeptide.. Catalyzes the removal of a penultimate prolyl residue from the N-termini of peptides. This chain is Probable Xaa-Pro aminopeptidase pepP (pepP), found in Aspergillus clavatus (strain ATCC 1007 / CBS 513.65 / DSM 816 / NCTC 3887 / NRRL 1 / QM 1276 / 107).